Reading from the N-terminus, the 537-residue chain is Chaperonin GroEL (537 aa).

ATP is bound by residues threonine 29–proline 32, aspartate 86–threonine 90, glycine 413, and aspartate 492.

Belongs to the chaperonin (HSP60) family. As to quaternary structure, forms a cylinder of 14 subunits composed of two heptameric rings stacked back-to-back. Interacts with the co-chaperonin GroES.

It localises to the cytoplasm. It carries out the reaction ATP + H2O + a folded polypeptide = ADP + phosphate + an unfolded polypeptide.. Together with its co-chaperonin GroES, plays an essential role in assisting protein folding. The GroEL-GroES system forms a nano-cage that allows encapsulation of the non-native substrate proteins and provides a physical environment optimized to promote and accelerate protein folding. The polypeptide is Chaperonin GroEL (Dehalococcoides mccartyi (strain CBDB1)).